The following is a 265-amino-acid chain: Ni-sirohydrochlorin a,c-diamide reductive cyclase complex, component CfbC (265 aa).

This sequence belongs to the NifH/BchL/ChlL family. Homodimer. The Ni-sirohydrochlorin a,c-diamide reductive cyclase complex is composed of a NifH homolog component CfbC and a NifD homolog component CfbD. The cofactor is [4Fe-4S] cluster.

It carries out the reaction Ni-sirohydrochlorin a,c-diamide + 3 AH2 + ATP + H2O = 15,17(3)-seco-F430-17(3)-acid + 3 A + ADP + phosphate. Its function is as follows. Involved in the biosynthesis of the unique nickel-containing tetrapyrrole coenzyme F430, the prosthetic group of methyl-coenzyme M reductase (MCR), which plays a key role in methanogenesis and anaerobic methane oxidation. Catalyzes both the six-electron reduction of the tetrahydroporphyrin ring system and the gamma-lactamization of the c-acetamide side chain of Ni-sirohydrochlorin a,c-diamide to yield 15,17(3)-seco-F430-17(3)-acid (seco-F430), the last intermediate in the biosynthesis of the coenzyme F430. The chain is Ni-sirohydrochlorin a,c-diamide reductive cyclase complex, component CfbC from Methanosarcina barkeri (strain Fusaro / DSM 804).